A 350-amino-acid chain; its full sequence is tRNA uridine(34) hydroxylase (350 aa).

In terms of domain architecture, Rhodanese spans D146–L240. The active-site Cysteine persulfide intermediate is the C200.

It belongs to the TrhO family.

The catalysed reaction is uridine(34) in tRNA + AH2 + O2 = 5-hydroxyuridine(34) in tRNA + A + H2O. Catalyzes oxygen-dependent 5-hydroxyuridine (ho5U) modification at position 34 in tRNAs. The chain is tRNA uridine(34) hydroxylase from Yersinia enterocolitica serotype O:8 / biotype 1B (strain NCTC 13174 / 8081).